A 317-amino-acid polypeptide reads, in one-letter code: MTTALDQLKQYTTVVADTGDFQQLAQYQPQDATTNPSLILKAVQKDAYKPILEKTVRDHRNESTDFIIDRLLIAFGTEILKIIPGRVSTEVDARLSFDAKRSIDKAHELIKLYEAAGIERDRILIKLASTWEGIRAAETLQKEGIKCNMTLLFSLVQAAACAEAGAQLISPFVGRIYDWYKKQAGADWDEAKNGGANDPGVQSVRRIYTYYKTFGYKTEVMGASFRTTSQIVELAGCDLLTISPDLLQKLHDSNETVTRKLSPDALHDKPTERVAIDEASFRFQLNDEAMATEKLAEGIRVFAADAVKLEKLIEALR.

The Schiff-base intermediate with substrate role is filled by Lys126.

Belongs to the transaldolase family. Type 1 subfamily. As to quaternary structure, homodimer.

It is found in the cytoplasm. The catalysed reaction is D-sedoheptulose 7-phosphate + D-glyceraldehyde 3-phosphate = D-erythrose 4-phosphate + beta-D-fructose 6-phosphate. It participates in carbohydrate degradation; pentose phosphate pathway; D-glyceraldehyde 3-phosphate and beta-D-fructose 6-phosphate from D-ribose 5-phosphate and D-xylulose 5-phosphate (non-oxidative stage): step 2/3. Transaldolase is important for the balance of metabolites in the pentose-phosphate pathway. In Burkholderia multivorans (strain ATCC 17616 / 249), this protein is Transaldolase.